Consider the following 179-residue polypeptide: Ribosome maturation factor RimM (179 aa).

Residues 103-176 form the PRC barrel domain; the sequence is EPDTYYDHQL…IVEIDPPKGL (74 aa).

This sequence belongs to the RimM family. Binds ribosomal protein uS19.

It is found in the cytoplasm. Functionally, an accessory protein needed during the final step in the assembly of 30S ribosomal subunit, possibly for assembly of the head region. Essential for efficient processing of 16S rRNA. May be needed both before and after RbfA during the maturation of 16S rRNA. It has affinity for free ribosomal 30S subunits but not for 70S ribosomes. The sequence is that of Ribosome maturation factor RimM from Mycobacterium leprae (strain Br4923).